Reading from the N-terminus, the 206-residue chain is Guanylate kinase (206 aa).

The Guanylate kinase-like domain maps to 7-185 (GLLIVISGPS…AVEKIRAIII (179 aa)). 14 to 21 (GPSGAGKG) contributes to the ATP binding site.

The protein belongs to the guanylate kinase family.

It localises to the cytoplasm. It catalyses the reaction GMP + ATP = GDP + ADP. Essential for recycling GMP and indirectly, cGMP. The polypeptide is Guanylate kinase (Caldanaerobacter subterraneus subsp. tengcongensis (strain DSM 15242 / JCM 11007 / NBRC 100824 / MB4) (Thermoanaerobacter tengcongensis)).